The following is a 358-amino-acid chain: Alpha-ketoglutarate-dependent L-arginine hydroxylase (358 aa).

Residues 1–21 (MTESPTTHHGAAPPDSVATPV) are disordered. The chain crosses the membrane as a helical span at residues 117-135 (LSFLLMLYAGLLGDVFGWA). Residue 156 to 158 (LVS) participates in L-arginine binding. Fe cation contacts are provided by H168 and E170. T194 lines the 2-oxoglutarate pocket. 268–270 (DGD) is an L-arginine binding site. H316 provides a ligand contact to Fe cation. Residues R330 and R334 each contribute to the 2-oxoglutarate site. L-arginine is bound at residue R334.

This sequence belongs to the clavaminate synthase family. Fe cation serves as cofactor.

It is found in the membrane. It carries out the reaction L-arginine + 2-oxoglutarate + O2 = (2S,3S)-hydroxyarginine + succinate + CO2. The protein operates within antibiotic biosynthesis. In terms of biological role, involved in the biosynthesis of capreomycidine, an unusual amino acid used by non-ribosomal peptide synthases (NRPS) to make the tuberactinomycin class of peptide antibiotics such as viomycin and capreomycin. Catalyzes the stereospecific hydroxylation of the C3 of (2S)-arginine to generate (3S)-hydroxy-(2S)-arginine. Usually clavaminic acid synthase-like oxygenases catalyze the formation of threo diastereomers, however VioC produces the erythro diastereomer of beta-carbon-hydroxylated L-arginine. It exerts a broad substrate specificity by accepting the analogs L-homoarginine and L-canavanine for the beta-carbon hydroxylation. The polypeptide is Alpha-ketoglutarate-dependent L-arginine hydroxylase (vioC) (Streptomyces vinaceus).